The chain runs to 496 residues: Glycerol kinase (496 aa).

Threonine 12 contributes to the ADP binding site. ATP-binding residues include threonine 12, threonine 13, and serine 14. Threonine 12 is a binding site for sn-glycerol 3-phosphate. Residue arginine 16 participates in ADP binding. Arginine 82, glutamate 83, and tyrosine 134 together coordinate sn-glycerol 3-phosphate. The glycerol site is built by arginine 82, glutamate 83, and tyrosine 134. The residue at position 230 (histidine 230) is a Phosphohistidine; by HPr. Residue aspartate 244 participates in sn-glycerol 3-phosphate binding. 2 residues coordinate glycerol: aspartate 244 and glutamine 245. ADP is bound by residues threonine 266 and glycine 309. The ATP site is built by threonine 266, glycine 309, glutamine 313, and glycine 410. The ADP site is built by glycine 410 and asparagine 414.

Belongs to the FGGY kinase family. As to quaternary structure, homotetramer and homodimer (in equilibrium). Post-translationally, the phosphoenolpyruvate-dependent sugar phosphotransferase system (PTS), including enzyme I, and histidine-containing protein (HPr) are required for the phosphorylation, which leads to the activation of the enzyme.

The catalysed reaction is glycerol + ATP = sn-glycerol 3-phosphate + ADP + H(+). It functions in the pathway polyol metabolism; glycerol degradation via glycerol kinase pathway; sn-glycerol 3-phosphate from glycerol: step 1/1. Its activity is regulated as follows. Activated by phosphorylation and inhibited by fructose 1,6-bisphosphate (FBP). Its function is as follows. Key enzyme in the regulation of glycerol uptake and metabolism. Catalyzes the phosphorylation of glycerol to yield sn-glycerol 3-phosphate. The chain is Glycerol kinase from Bacillus mycoides (strain KBAB4) (Bacillus weihenstephanensis).